The sequence spans 160 residues: Phosphoribosyl-ATP pyrophosphatase (160 aa).

Belongs to the PRA-PH family.

It localises to the cytoplasm. The enzyme catalyses 1-(5-phospho-beta-D-ribosyl)-ATP + H2O = 1-(5-phospho-beta-D-ribosyl)-5'-AMP + diphosphate + H(+). Its pathway is amino-acid biosynthesis; L-histidine biosynthesis; L-histidine from 5-phospho-alpha-D-ribose 1-diphosphate: step 2/9. In Granulibacter bethesdensis (strain ATCC BAA-1260 / CGDNIH1), this protein is Phosphoribosyl-ATP pyrophosphatase.